The sequence spans 324 residues: Antihemorrhagic factor cHLP-A (324 aa).

A signal peptide spans 1-19; the sequence is MNSLVALVLLGQIIGSTLS. 2 consecutive Cystatin fetuin-A-type domains span residues 21 to 130 and 141 to 254; these read QLGP…VKCK and RNCP…SDCV. 6 disulfide bridges follow: C28–C315, C85–C96, C110–C129, C143–C146, C205–C217, and C230–C253. N204 is a glycosylation site (N-linked (GlcNAc...) asparagine). A glycan (N-linked (GlcNAc...) asparagine) is linked at N282.

It belongs to the fetuin family. In terms of assembly, homodimer. Expressed by the liver.

The protein resides in the secreted. Functionally, potent inhibitor of hemorrhagic activity but also proteolytic activities. Inhibition occurs by formation of a non-covalent complex between this protein and the proteinases at their metalloproteinase domains. The sequence is that of Antihemorrhagic factor cHLP-A from Gloydius brevicauda (Korean slamosa snake).